The following is a 154-amino-acid chain: Large ribosomal subunit protein uL24 (154 aa).

Residues 97–154 (EIAARKNLPPPEVPEETSNDTKESDENVTGADKEETNEIKEEDLNDNEDKNNDGSQEA) form a disordered region. Basic and acidic residues predominate over residues 115–135 (NDTKESDENVTGADKEETNEI).

Belongs to the universal ribosomal protein uL24 family. In terms of assembly, part of the 50S ribosomal subunit.

Its function is as follows. One of two assembly initiator proteins, it binds directly to the 5'-end of the 23S rRNA, where it nucleates assembly of the 50S subunit. In terms of biological role, located at the polypeptide exit tunnel on the outside of the subunit. This chain is Large ribosomal subunit protein uL24, found in Picrophilus torridus (strain ATCC 700027 / DSM 9790 / JCM 10055 / NBRC 100828 / KAW 2/3).